The following is an 860-amino-acid chain: Translation initiation factor IF-2 (860 aa).

Residues 1 to 11 (MSDTKSGDDKT) show a composition bias toward basic and acidic residues. The interval 1–265 (MSDTKSGDDK…MRRRQEKFKR (265 aa)) is disordered. Over residues 79–88 (AAPVVQEAPK) the composition is skewed to low complexity. The segment covering 110–183 (SRSEMEARRR…RRRAEEEARR (74 aa)) has biased composition (basic and acidic residues). Positions 358–525 (PRPPVVTIMG…AILLQAEILD (168 aa)) constitute a tr-type G domain. Residues 367-374 (GHVDHGKT) are G1. 367 to 374 (GHVDHGKT) lines the GTP pocket. The interval 392 to 396 (GITQH) is G2. The interval 413–416 (DTPG) is G3. Residues 413–417 (DTPGH) and 467–470 (NKID) contribute to the GTP site. Residues 467-470 (NKID) are G4. The G5 stretch occupies residues 503–505 (SAT).

Belongs to the TRAFAC class translation factor GTPase superfamily. Classic translation factor GTPase family. IF-2 subfamily.

It is found in the cytoplasm. One of the essential components for the initiation of protein synthesis. Protects formylmethionyl-tRNA from spontaneous hydrolysis and promotes its binding to the 30S ribosomal subunits. Also involved in the hydrolysis of GTP during the formation of the 70S ribosomal complex. This chain is Translation initiation factor IF-2, found in Mesorhizobium japonicum (strain LMG 29417 / CECT 9101 / MAFF 303099) (Mesorhizobium loti (strain MAFF 303099)).